Reading from the N-terminus, the 483-residue chain is Threonine synthase-like 2 (483 aa).

Residue Lys113 is modified to N6-(pyridoxal phosphate)lysine.

The protein belongs to the threonine synthase family. It depends on pyridoxal 5'-phosphate as a cofactor.

Its function is as follows. Acts as a catabolic phospho-lyase on both gamma- and beta-phosphorylated substrates. Degrades O-phospho-threonine (PThr) to alpha-ketobutyrate, ammonia and phosphate. Also degrades O-phospho-homoserine (PHS), but this is not its physiological substrate. The chain is Threonine synthase-like 2 (Thnsl2) from Mus musculus (Mouse).